The sequence spans 143 residues: Ribonuclease HI (143 aa).

An RNase H type-1 domain is found at 1–136 (MQEIEIFCDG…CNSLAKLEAQ (136 aa)). 4 residues coordinate Mg(2+): D9, E47, D69, and N128.

Belongs to the RNase H family. As to quaternary structure, monomer. The cofactor is Mg(2+).

Its subcellular location is the cytoplasm. The catalysed reaction is Endonucleolytic cleavage to 5'-phosphomonoester.. Its function is as follows. Endonuclease that specifically degrades the RNA of RNA-DNA hybrids. The polypeptide is Ribonuclease HI (rnhA) (Helicobacter pylori (strain J99 / ATCC 700824) (Campylobacter pylori J99)).